The following is a 127-amino-acid chain: Aspartate 1-decarboxylase (127 aa).

S25 serves as the catalytic Schiff-base intermediate with substrate; via pyruvic acid. S25 bears the Pyruvic acid (Ser) mark. T57 contacts substrate. The Proton donor role is filled by Y58. 73-75 (GAA) lines the substrate pocket.

The protein belongs to the PanD family. As to quaternary structure, heterooctamer of four alpha and four beta subunits. Pyruvate is required as a cofactor. Is synthesized initially as an inactive proenzyme, which is activated by self-cleavage at a specific serine bond to produce a beta-subunit with a hydroxyl group at its C-terminus and an alpha-subunit with a pyruvoyl group at its N-terminus.

The protein resides in the cytoplasm. It catalyses the reaction L-aspartate + H(+) = beta-alanine + CO2. It functions in the pathway cofactor biosynthesis; (R)-pantothenate biosynthesis; beta-alanine from L-aspartate: step 1/1. Its function is as follows. Catalyzes the pyruvoyl-dependent decarboxylation of aspartate to produce beta-alanine. The protein is Aspartate 1-decarboxylase of Clostridium acetobutylicum (strain ATCC 824 / DSM 792 / JCM 1419 / IAM 19013 / LMG 5710 / NBRC 13948 / NRRL B-527 / VKM B-1787 / 2291 / W).